A 153-amino-acid chain; its full sequence is Arginine repressor (153 aa).

It belongs to the ArgR family.

The protein resides in the cytoplasm. It functions in the pathway amino-acid biosynthesis; L-arginine biosynthesis [regulation]. Functionally, regulates arginine biosynthesis genes. The sequence is that of Arginine repressor from Glaesserella parasuis serovar 5 (strain SH0165) (Haemophilus parasuis).